Consider the following 501-residue polypeptide: Aspartyl/glutamyl-tRNA(Asn/Gln) amidotransferase subunit B (501 aa).

Positions 271-299 are disordered; that stretch reads VQETRHYQETDGSTSKGRPKETAEDYRYF. Basic and acidic residues predominate over residues 288–299; sequence RPKETAEDYRYF.

The protein belongs to the GatB/GatE family. GatB subfamily. Heterotrimer of A, B and C subunits.

The enzyme catalyses L-glutamyl-tRNA(Gln) + L-glutamine + ATP + H2O = L-glutaminyl-tRNA(Gln) + L-glutamate + ADP + phosphate + H(+). The catalysed reaction is L-aspartyl-tRNA(Asn) + L-glutamine + ATP + H2O = L-asparaginyl-tRNA(Asn) + L-glutamate + ADP + phosphate + 2 H(+). Its function is as follows. Allows the formation of correctly charged Asn-tRNA(Asn) or Gln-tRNA(Gln) through the transamidation of misacylated Asp-tRNA(Asn) or Glu-tRNA(Gln) in organisms which lack either or both of asparaginyl-tRNA or glutaminyl-tRNA synthetases. The reaction takes place in the presence of glutamine and ATP through an activated phospho-Asp-tRNA(Asn) or phospho-Glu-tRNA(Gln). The chain is Aspartyl/glutamyl-tRNA(Asn/Gln) amidotransferase subunit B from Corynebacterium diphtheriae (strain ATCC 700971 / NCTC 13129 / Biotype gravis).